We begin with the raw amino-acid sequence, 4092 residues long: Dynein heavy chain, cytoplasmic (4092 aa).

A stem region spans residues 1–1757 (MCKNEARLAN…FISQSGYLLQ (1757 aa)). Coiled-coil stretches lie at residues 154 to 175 (VETI…QQLH), 486 to 508 (KLEQ…LQNT), 542 to 566 (KVLE…TGLE), 932 to 959 (VIKL…YVKE), 1042 to 1063 (YERD…VEDM), and 1681 to 1705 (KGLL…LVEY). AAA regions lie at residues 1758 to 1979 (YKFE…VLRN), 2036 to 2273 (QCLK…NDLV), 2379 to 2628 (SLEA…LVRG), and 2722 to 2984 (TFCD…KVGV). Residues 1796–1803 (GPAGTGKT), 2074–2081 (GKAGCGKT), 2418–2425 (GPPGSGKT), and 2760–2767 (GASRTGKT) each bind ATP. 3 coiled-coil regions span residues 2993-3092 (IDGL…KRKE), 3242-3300 (KTKA…KSLT), and 3532-3608 (ITLT…EEFF). Residues 2993–3300 (IDGLRALVKL…RSISLVKSLT (308 aa)) are stalk. AAA regions lie at residues 3370–3599 (LVTL…NIEK) and 3760–3970 (LNWF…YLEN).

The protein belongs to the dynein heavy chain family. In terms of assembly, the dynein complex consists of at least two heavy chains and a number of intermediate and light chains. Interacts with DYN3.

Its subcellular location is the cytoplasm. It is found in the cytoskeleton. Cytoplasmic dynein acts as a motor for the intracellular retrograde motility of vesicles and organelles along microtubules. Dynein has ATPase activity; the force-producing power stroke is thought to occur on release of ADP. Required to maintain uniform nuclear distribution in hyphae. May play an important role in the proper orientation of the mitotic spindle into the budding daughter cell yeast. Probably required for normal progression of the cell cycle. The sequence is that of Dynein heavy chain, cytoplasmic (DYN1) from Saccharomyces cerevisiae (strain ATCC 204508 / S288c) (Baker's yeast).